A 451-amino-acid chain; its full sequence is UPF0210 protein APL_1491 (451 aa).

It belongs to the UPF0210 family. As to quaternary structure, homodimer.

This chain is UPF0210 protein APL_1491, found in Actinobacillus pleuropneumoniae serotype 5b (strain L20).